We begin with the raw amino-acid sequence, 295 residues long: DegV domain-containing protein MG326 (295 aa).

The DegV domain occupies 4-292 (TAIITDSTAS…IDAFSISLLI (289 aa)). 2 residues coordinate hexadecanoate: Thr-63 and Ser-95.

Its function is as follows. May bind long-chain fatty acids, such as palmitate, and may play a role in lipid transport or fatty acid metabolism. This chain is DegV domain-containing protein MG326, found in Mycoplasma genitalium (strain ATCC 33530 / DSM 19775 / NCTC 10195 / G37) (Mycoplasmoides genitalium).